An 83-amino-acid polypeptide reads, in one-letter code: ATP synthase subunit c, chloroplastic (83 aa).

2 helical membrane passes run 3–23 (PLIAASSVIAAGLAIGLAAIG) and 57–77 (FAFMESLTIYGLVVALALLFA).

Belongs to the ATPase C chain family. In terms of assembly, F-type ATPases have 2 components, F(1) - the catalytic core - and F(0) - the membrane proton channel. F(1) has five subunits: alpha(3), beta(3), gamma(1), delta(1), epsilon(1). F(0) has four main subunits: a(1), b(1), b'(1) and c(10-14). The alpha and beta chains form an alternating ring which encloses part of the gamma chain. F(1) is attached to F(0) by a central stalk formed by the gamma and epsilon chains, while a peripheral stalk is formed by the delta, b and b' chains.

The protein localises to the plastid. It is found in the chloroplast thylakoid membrane. Functionally, f(1)F(0) ATP synthase produces ATP from ADP in the presence of a proton or sodium gradient. F-type ATPases consist of two structural domains, F(1) containing the extramembraneous catalytic core and F(0) containing the membrane proton channel, linked together by a central stalk and a peripheral stalk. During catalysis, ATP synthesis in the catalytic domain of F(1) is coupled via a rotary mechanism of the central stalk subunits to proton translocation. In terms of biological role, key component of the F(0) channel; it plays a direct role in translocation across the membrane. A homomeric c-ring of between 10-14 subunits forms the central stalk rotor element with the F(1) delta and epsilon subunits. The chain is ATP synthase subunit c, chloroplastic from Oedogonium cardiacum (Filamentous green alga).